Here is a 441-residue protein sequence, read N- to C-terminus: Ribulose bisphosphate carboxylase large chain (441 aa).

Lys-5 carries the post-translational modification N6,N6,N6-trimethyllysine. 2 residues coordinate substrate: Asn-114 and Thr-164. The Proton acceptor role is filled by Lys-166. Residue Lys-168 participates in substrate binding. The Mg(2+) site is built by Lys-192, Asp-194, and Glu-195. At Lys-192 the chain carries N6-carboxylysine. The active-site Proton acceptor is the His-285. Residues Arg-286, His-318, and Ser-370 each contribute to the substrate site.

This sequence belongs to the RuBisCO large chain family. Type I subfamily. As to quaternary structure, heterohexadecamer of 8 large chains and 8 small chains; disulfide-linked. The disulfide link is formed within the large subunit homodimers. It depends on Mg(2+) as a cofactor. Post-translationally, the disulfide bond which can form in the large chain dimeric partners within the hexadecamer appears to be associated with oxidative stress and protein turnover.

The protein resides in the plastid. The protein localises to the chloroplast. The enzyme catalyses 2 (2R)-3-phosphoglycerate + 2 H(+) = D-ribulose 1,5-bisphosphate + CO2 + H2O. It carries out the reaction D-ribulose 1,5-bisphosphate + O2 = 2-phosphoglycolate + (2R)-3-phosphoglycerate + 2 H(+). In terms of biological role, ruBisCO catalyzes two reactions: the carboxylation of D-ribulose 1,5-bisphosphate, the primary event in carbon dioxide fixation, as well as the oxidative fragmentation of the pentose substrate in the photorespiration process. Both reactions occur simultaneously and in competition at the same active site. The protein is Ribulose bisphosphate carboxylase large chain of Drosera petiolaris (Woolly sundew).